Consider the following 900-residue polypeptide: Probable 2-oxoadipate dehydrogenase complex component E1 homolog (900 aa).

It belongs to the alpha-ketoglutarate dehydrogenase family. Thiamine diphosphate serves as cofactor.

It is found in the mitochondrion. The enzyme catalyses N(6)-[(R)-lipoyl]-L-lysyl-[protein] + 2-oxoadipate + H(+) = N(6)-[(R)-S(8)-glutaryldihydrolipoyl]-L-lysyl-[protein] + CO2. 2-oxoadipate dehydrogenase (E1a) component of the 2-oxoadipate dehydrogenase complex (OADHC). Participates in the first step, rate limiting for the overall conversion of 2-oxoadipate (alpha-ketoadipate) to glutaryl-CoA and CO(2) catalyzed by the whole OADHC. Catalyzes the irreversible decarboxylation of 2-oxoadipate via the thiamine diphosphate (ThDP) cofactor and subsequent transfer of the decarboxylated acyl intermediate on an oxidized dihydrolipoyl group that is covalently amidated to the E2 enzyme (dihydrolipoyllysine-residue succinyltransferase or DLST). The sequence is that of Probable 2-oxoadipate dehydrogenase complex component E1 homolog (odhA) from Dictyostelium discoideum (Social amoeba).